Reading from the N-terminus, the 129-residue chain is Small ribosomal subunit protein uS8 (129 aa).

This sequence belongs to the universal ribosomal protein uS8 family. As to quaternary structure, part of the 30S ribosomal subunit.

In terms of biological role, one of the primary rRNA binding proteins, it binds directly to 16S rRNA central domain where it helps coordinate assembly of the platform of the 30S subunit. In Thermoplasma acidophilum (strain ATCC 25905 / DSM 1728 / JCM 9062 / NBRC 15155 / AMRC-C165), this protein is Small ribosomal subunit protein uS8.